The primary structure comprises 681 residues: Epithelial splicing regulatory protein 1 (681 aa).

3 consecutive RRM domains span residues 225–302 (TVVR…KATG), 326–406 (VIVR…RSTA), and 445–525 (DCIR…QCSA). Ser543 bears the Phosphoserine mark. Arg582 is subject to Omega-N-methylarginine.

The protein belongs to the ESRP family. In terms of tissue distribution, epithelial cell-specific.

It localises to the nucleus. MRNA splicing factor that regulates the formation of epithelial cell-specific isoforms. Specifically regulates the expression of FGFR2-IIIb, an epithelial cell-specific isoform of FGFR2. Also regulates the splicing of CD44, CTNND1, ENAH, 3 transcripts that undergo changes in splicing during the epithelial-to-mesenchymal transition (EMT). Acts by directly binding specific sequences in mRNAs. Binds the GU-rich sequence motifs in the ISE/ISS-3, a cis-element regulatory region present in the mRNA of FGFR2. Regulates splicing and expression of genes involved in inner ear development, auditory hair cell differentiation, and cell fate specification in the cochlear epithelium. This is Epithelial splicing regulatory protein 1 (ESRP1) from Homo sapiens (Human).